We begin with the raw amino-acid sequence, 178 residues long: Acireductone dioxygenase (178 aa).

Residues 1–22 form a disordered region; the sequence is MKAYWYDNKPGDQREPHDSGRP. Residues 9–22 are compositionally biased toward basic and acidic residues; sequence KPGDQREPHDSGRP. Residues His-81, His-83, Glu-87, and His-126 each contribute to the Fe(2+) site. The Ni(2+) site is built by His-81, His-83, Glu-87, and His-126.

Belongs to the acireductone dioxygenase (ARD) family. Fe(2+) is required as a cofactor. Requires Ni(2+) as cofactor.

The protein resides in the cytoplasm. Its subcellular location is the nucleus. The enzyme catalyses 1,2-dihydroxy-5-(methylsulfanyl)pent-1-en-3-one + O2 = 4-methylsulfanyl-2-oxobutanoate + formate + 2 H(+). The catalysed reaction is 1,2-dihydroxy-5-(methylsulfanyl)pent-1-en-3-one + O2 = 3-(methylsulfanyl)propanoate + CO + formate + 2 H(+). Its pathway is amino-acid biosynthesis; L-methionine biosynthesis via salvage pathway; L-methionine from S-methyl-5-thio-alpha-D-ribose 1-phosphate: step 5/6. Catalyzes 2 different reactions between oxygen and the acireductone 1,2-dihydroxy-3-keto-5-methylthiopentene (DHK-MTPene) depending upon the metal bound in the active site. Fe-containing acireductone dioxygenase (Fe-ARD) produces formate and 2-keto-4-methylthiobutyrate (KMTB), the alpha-ketoacid precursor of methionine in the methionine recycle pathway. Ni-containing acireductone dioxygenase (Ni-ARD) produces methylthiopropionate, carbon monoxide and formate, and does not lie on the methionine recycle pathway. The sequence is that of Acireductone dioxygenase (adi1) from Emericella nidulans (strain FGSC A4 / ATCC 38163 / CBS 112.46 / NRRL 194 / M139) (Aspergillus nidulans).